A 290-amino-acid chain; its full sequence is Iron-sulfur cluster carrier protein (290 aa).

47 to 54 (GKGGVGKS) lines the ATP pocket.

The protein belongs to the Mrp/NBP35 ATP-binding proteins family. In terms of assembly, homodimer.

Its function is as follows. Binds and transfers iron-sulfur (Fe-S) clusters to target apoproteins. Can hydrolyze ATP. This chain is Iron-sulfur cluster carrier protein, found in Methanocaldococcus jannaschii (strain ATCC 43067 / DSM 2661 / JAL-1 / JCM 10045 / NBRC 100440) (Methanococcus jannaschii).